Reading from the N-terminus, the 1040-residue chain is DNA cross-link repair 1A protein (1040 aa).

The nuclear localization region stretch occupies residues 1-190 (MLEDISEEDI…RAGDHPFSSP (190 aa)). Residues 15–76 (SKRKPKRVDP…LGNAGCQTSV (62 aa)) form a disordered region. A compositionally biased stretch (basic and acidic residues) spans 53-65 (RAAEAKEVKDHEV). The UBZ4-type zinc finger occupies 119-149 (DGYCPNCQMPFSSLIGQTPRWHVFECLDSPP). Residues C122, C125, H140, and C144 each contribute to the Zn(2+) site. Glycyl lysine isopeptide (Lys-Gly) (interchain with G-Cter in SUMO2) cross-links involve residues K202, K236, K269, K353, K361, K429, K488, K508, K517, K533, and K536. Positions 396 to 614 (LPYDLACTGG…KSLSDLEFDA (219 aa)) are nuclear focus formation. 2 disordered regions span residues 582–602 (GINLNPVPSPNQKRSSQCKRK) and 623–651 (SVELSSERSQRQKKRCRKSNSLQEGACQK). S590 carries the post-translational modification Phosphoserine. Residues K668, K670, and K674 each participate in a glycyl lysine isopeptide (Lys-Gly) (interchain with G-Cter in SUMO2) cross-link.

It belongs to the DNA repair metallo-beta-lactamase (DRMBL) family. In terms of assembly, binds constitutively to TP53BP1. Binds CDC27, which is itself a component of the anaphase promoting complex (APC). Binds PIAS1. As to expression, expressed in brain, heart, kidney, liver, pancreas, placenta and skeletal muscle.

It localises to the nucleus. The enzyme catalyses a beta-lactam + H2O = a substituted beta-amino acid. With respect to regulation, beta-lactamase activity is inhibited by sulbactam. Its function is as follows. May be required for DNA interstrand cross-link repair. Also required for checkpoint mediated cell cycle arrest in early prophase in response to mitotic spindle poisons. Possesses beta-lactamase activity, catalyzing the hydrolysis of penicillin G and nitrocefin. Exhibits no activity towards other beta-lactam antibiotic classes including cephalosporins (cefotaxime) and carbapenems (imipenem). In Homo sapiens (Human), this protein is DNA cross-link repair 1A protein (DCLRE1A).